The following is a 504-amino-acid chain: Probable phenylalanine--tRNA ligase beta subunit (504 aa).

The 77-residue stretch at 270–346 folds into the B5 domain; sequence IKDKSYLLSI…ICYGFNNINM (77 aa). Mg(2+)-binding residues include Asp324, Asp330, Glu333, and Asp334.

This sequence belongs to the phenylalanyl-tRNA synthetase beta subunit family. Type 2 subfamily. Tetramer of two alpha and two beta subunits. It depends on Mg(2+) as a cofactor.

Its subcellular location is the cytoplasm. It catalyses the reaction tRNA(Phe) + L-phenylalanine + ATP = L-phenylalanyl-tRNA(Phe) + AMP + diphosphate + H(+). In Vairimorpha ceranae (strain BRL01) (Microsporidian parasite), this protein is Probable phenylalanine--tRNA ligase beta subunit.